A 419-amino-acid chain; its full sequence is Inositol-tetrakisphosphate 1-kinase (419 aa).

1D-myo-inositol 1,3,4-trisphosphate is bound at residue lysine 18. ATP is bound by residues arginine 106 and lysine 157. The ATP-grasp domain maps to 117–334; that stretch reads EAYMKDDRIC…TGGAATEEVA (218 aa). 1D-myo-inositol 1,3,4-trisphosphate contacts are provided by histidine 167 and lysine 199. Residues 188-199, serine 214, serine 232, and serine 236 each bind ATP; that span reads QNFINHNAVLYK. The Mg(2+) site is built by aspartate 281, aspartate 295, and asparagine 297. Asparagine 297 is a 1D-myo-inositol 1,3,4-trisphosphate binding site. N6-acetyllysine; by EP300 and CREBBP is present on lysine 388. Phosphoserine is present on serine 401. Lysine 415 carries the N6-acetyllysine; by EP300 and CREBBP modification.

Belongs to the ITPK1 family. Monomer. Interacts with GPS1/COPS1. It depends on Mg(2+) as a cofactor. Acetylation by EP300 and CREBBP destabilizes ITPK1, and down-regulates enzymatic activity. Deacetylated by SIRT1.

It catalyses the reaction 1D-myo-inositol 3,4,5,6-tetrakisphosphate + ATP = 1D-myo-inositol 1,3,4,5,6-pentakisphosphate + ADP + H(+). The enzyme catalyses 1D-myo-inositol 1,3,4-trisphosphate + ATP = 1D-myo-inositol 1,3,4,5-tetrakisphosphate + ADP + H(+). It carries out the reaction 1D-myo-inositol 1,3,4-trisphosphate + ATP = 1D-myo-inositol 1,3,4,6-tetrakisphosphate + ADP + H(+). The catalysed reaction is 1D-myo-inositol 3,4,6-trisphosphate + ATP = 1D-myo-inositol 1,3,4,6-tetrakisphosphate + ADP + H(+). It catalyses the reaction 1D-myo-inositol 1,3,4-trisphosphate + 1D-myo-inositol 1,3,4,5,6-pentakisphosphate = 1D-myo-inositol 3,4,5,6-tetrakisphosphate + 1D-myo-inositol 1,3,4,6-tetrakisphosphate. The enzyme catalyses 1D-myo-inositol 1,3,4-trisphosphate + 1D-myo-inositol 1,3,4,5,6-pentakisphosphate = 1D-myo-inositol 3,4,5,6-tetrakisphosphate + 1D-myo-inositol 1,3,4,5-tetrakisphosphate. In terms of biological role, kinase that can phosphorylate various inositol polyphosphate such as Ins(3,4,5,6)P4 or Ins(1,3,4)P3. Phosphorylates Ins(3,4,5,6)P4 at position 1 to form Ins(1,3,4,5,6)P5. This reaction is thought to have regulatory importance, since Ins(3,4,5,6)P4 is an inhibitor of plasma membrane Ca(2+)-activated Cl(-) channels, while Ins(1,3,4,5,6)P5 is not. Also phosphorylates Ins(1,3,4)P3 on O-5 and O-6 to form Ins(1,3,4,6)P4, an essential molecule in the hexakisphosphate (InsP6) pathway. Also acts as an inositol polyphosphate phosphatase that dephosphorylates Ins(1,3,4,5)P4 and Ins(1,3,4,6)P4 to Ins(1,3,4)P3, and Ins(1,3,4,5,6)P5 to Ins(3,4,5,6)P4. May also act as an isomerase that interconverts the inositol tetrakisphosphate isomers Ins(1,3,4,5)P4 and Ins(1,3,4,6)P4 in the presence of ADP and magnesium. Probably acts as the rate-limiting enzyme of the InsP6 pathway. Modifies TNF-alpha-induced apoptosis by interfering with the activation of TNFRSF1A-associated death domain. Plays an important role in MLKL-mediated necroptosis. Produces highly phosphorylated inositol phosphates such as inositolhexakisphosphate (InsP6) which bind to MLKL mediating the release of an N-terminal auto-inhibitory region leading to its activation. Essential for activated phospho-MLKL to oligomerize and localize to the cell membrane during necroptosis. This is Inositol-tetrakisphosphate 1-kinase from Mus musculus (Mouse).